A 62-amino-acid polypeptide reads, in one-letter code: Ranacyclin-T (62 aa).

The N-terminal stretch at 1–22 (MFTMKKTLLVLFFLGVVSLSLC) is a signal peptide. The propeptide occupies 23–43 (VEERDADEEDGGEVMEEEVKR). C49 and C59 are disulfide-bonded. K60 carries the lysine amide modification.

This sequence belongs to the frog skin active peptide (FSAP) family. Brevinin subfamily. As to expression, expressed by the skin granular glands.

The protein localises to the secreted. Functionally, has antibacterial activity against Gram-positive bacteria B.megaterium Bm11, S.lentus and M.luteus, and Gram-negative bacteria E.coli D22, Y.pseudotuberculosis YP III and P.syringae pv tabaci, and antifungal activity against C.albicans ATCC 10231, C.tropicalis, C.guiller-mondii and P.nicotianae spores. Has weak hemolytic activity. The mature peptide inserts into the hydrophobic core of the bacterial cell membrane and increases permeability without disrupting membrane integrity. Probably binds to the outer membrane surface before aggregating to form transmembrane pores. This is Ranacyclin-T (RNCT) from Rana temporaria (European common frog).